The sequence spans 145 residues: D-aminoacyl-tRNA deacylase (145 aa).

Positions 137 to 138 (GP) match the Gly-cisPro motif, important for rejection of L-amino acids motif.

The protein belongs to the DTD family. As to quaternary structure, homodimer.

It localises to the cytoplasm. The catalysed reaction is glycyl-tRNA(Ala) + H2O = tRNA(Ala) + glycine + H(+). It carries out the reaction a D-aminoacyl-tRNA + H2O = a tRNA + a D-alpha-amino acid + H(+). In terms of biological role, an aminoacyl-tRNA editing enzyme that deacylates mischarged D-aminoacyl-tRNAs. Also deacylates mischarged glycyl-tRNA(Ala), protecting cells against glycine mischarging by AlaRS. Acts via tRNA-based rather than protein-based catalysis; rejects L-amino acids rather than detecting D-amino acids in the active site. By recycling D-aminoacyl-tRNA to D-amino acids and free tRNA molecules, this enzyme counteracts the toxicity associated with the formation of D-aminoacyl-tRNA entities in vivo and helps enforce protein L-homochirality. The sequence is that of D-aminoacyl-tRNA deacylase from Francisella tularensis subsp. novicida (strain U112).